Reading from the N-terminus, the 433-residue chain is MYVCGPTVYDTAHIGNARSIVVYDVLFQLLKFCYGKATYVRNITDIDDKIINAANEKDSSIESISTYYTRAFHEDMRSINCVEPTHEPKAAENIKYIIELIEYLLQSGHAYESNKHIYFSIESYPEYGALSGKKIDELEHGSRVEVGENKKHPGDFVLWKPANDTDYKLSSYWNSPWGEGRPGWHIECSAMSYAYLGKDFDIHGGGIDLQFPHHENEIAQNKSAFAGSMFAKYWVHNGSLTVNKEKMSKSLFNIVKVRDLLDSGIKGEVIRYALFKTHYRKPLDWTESVISESQETLNKFYRLLRGIDVASIEKSDVEVSRDFIETLKNDLNIPEALAILHEMATKINKTNNENEKLKLTESFIKSARFIGLLESSYQEWFTAGISYQEIKRLIDLRKVAKQNKDYDAADKIRDQLKQMGVTISDNEDGTTTW.

Zn(2+) is bound at residue cysteine 4. Residues 6-16 (PTVYDTAHIGN) carry the 'HIGH' region motif. Residues cysteine 188, histidine 213, and glutamate 217 each contribute to the Zn(2+) site. Positions 246–250 (KMSKS) match the 'KMSKS' region motif. Lysine 249 serves as a coordination point for ATP.

The protein belongs to the class-I aminoacyl-tRNA synthetase family. As to quaternary structure, monomer. Zn(2+) serves as cofactor.

The protein localises to the cytoplasm. The catalysed reaction is tRNA(Cys) + L-cysteine + ATP = L-cysteinyl-tRNA(Cys) + AMP + diphosphate. This Wolbachia sp. subsp. Brugia malayi (strain TRS) protein is Cysteine--tRNA ligase.